The following is a 302-amino-acid chain: m7GpppN-mRNA hydrolase NUDT17 (302 aa).

In terms of domain architecture, Nudix hydrolase spans 89–237; the sequence is GRGVDLGVAV…DGTETPKHLP (149 aa). The Nudix box motif lies at 128 to 149; sequence GHVEPDEELLDGGLRELWEESG. Residues glutamate 143 and glutamate 147 each contribute to the Mg(2+) site.

It belongs to the Nudix hydrolase family. It depends on Mg(2+) as a cofactor. The cofactor is Mn(2+).

The catalysed reaction is a 5'-end (N(7)-methyl 5'-triphosphoguanosine)-ribonucleoside in mRNA + H2O = N(7)-methyl-GDP + a 5'-end phospho-ribonucleoside in mRNA + 2 H(+). In terms of biological role, acts as a decapping enzyme capable of hydrolyzing monomethylated capped RNAs (in vitro). Hydrolyzes monomethylated capped RNA after alpha and beta phosphates to form N(7)-methyl-GDP. Shows low activity towards unmethylated capped RNA. This Bos taurus (Bovine) protein is m7GpppN-mRNA hydrolase NUDT17 (NUDT17).